Consider the following 174-residue polypeptide: Peptidyl-prolyl cis-trans isomerase D, mitochondrial (174 aa).

In terms of domain architecture, PPIase cyclophilin-type spans 10-173; sequence FFQIKQGNTP…AACVIEDCGQ (164 aa).

The protein belongs to the cyclophilin-type PPIase family. PPIase D subfamily.

It localises to the mitochondrion. The catalysed reaction is [protein]-peptidylproline (omega=180) = [protein]-peptidylproline (omega=0). With respect to regulation, binds cyclosporin A (CsA). CsA mediates some of its effects via an inhibitory action on PPIase. PPIases accelerate the folding of proteins. It catalyzes the cis-trans isomerization of proline imidic peptide bonds in oligopeptides. The polypeptide is Peptidyl-prolyl cis-trans isomerase D, mitochondrial (cypD) (Dictyostelium discoideum (Social amoeba)).